A 1390-amino-acid chain; its full sequence is DNA-directed RNA polymerase subunit beta (1390 aa).

The protein belongs to the RNA polymerase beta chain family. As to quaternary structure, the RNAP catalytic core consists of 2 alpha, 1 beta, 1 beta' and 1 omega subunit. When a sigma factor is associated with the core the holoenzyme is formed, which can initiate transcription.

The enzyme catalyses RNA(n) + a ribonucleoside 5'-triphosphate = RNA(n+1) + diphosphate. Functionally, DNA-dependent RNA polymerase catalyzes the transcription of DNA into RNA using the four ribonucleoside triphosphates as substrates. This is DNA-directed RNA polymerase subunit beta from Mycoplasma genitalium (strain ATCC 33530 / DSM 19775 / NCTC 10195 / G37) (Mycoplasmoides genitalium).